Here is a 573-residue protein sequence, read N- to C-terminus: Acyl-coenzyme A synthetase ACSM1, mitochondrial (573 aa).

The transit peptide at 1–35 (MQWLKSFQICKVLQGFSLSPTQLHRRLFSRVGAPR) directs the protein to the mitochondrion. Lysine 81 is subject to N6-succinyllysine. Residue lysine 142 is modified to N6-acetyllysine; alternate. An N6-succinyllysine; alternate modification is found at lysine 142. At lysine 179 the chain carries N6-succinyllysine. At lysine 200 the chain carries N6-acetyllysine; alternate. Lysine 200 bears the N6-succinyllysine; alternate mark. Residue lysine 210 is modified to N6-acetyllysine. Position 222 to 230 (222 to 230 (TSGTTGYPK)) interacts with ATP. Lysine 233 and lysine 324 each carry N6-succinyllysine. N6-acetyllysine; alternate is present on residues lysine 352 and lysine 387. N6-succinyllysine; alternate occurs at positions 352 and 387. Residues aspartate 448 and arginine 463 each coordinate ATP. Lysine 501 is subject to N6-succinyllysine. The residue at position 527 (lysine 527) is an N6-acetyllysine. Lysine 534 carries the post-translational modification N6-acetyllysine; alternate. The residue at position 534 (lysine 534) is an N6-succinyllysine; alternate. Lysine 545 is modified (N6-acetyllysine). Residue lysine 559 participates in ATP binding.

Belongs to the ATP-dependent AMP-binding enzyme family. As to quaternary structure, monomer. Mg(2+) serves as cofactor. Requires Mn(2+) as cofactor. In terms of tissue distribution, highly expressed in liver and kidney.

It is found in the mitochondrion matrix. Its subcellular location is the mitochondrion. It carries out the reaction a medium-chain fatty acid + ATP + CoA = a medium-chain fatty acyl-CoA + AMP + diphosphate. It catalyses the reaction benzoate + ATP + CoA = benzoyl-CoA + AMP + diphosphate. The enzyme catalyses (R)-lipoate + GTP + H(+) = (R)-lipoyl-GMP + diphosphate. The catalysed reaction is octanoate + ATP + CoA = octanoyl-CoA + AMP + diphosphate. It carries out the reaction decanoate + ATP + CoA = decanoyl-CoA + AMP + diphosphate. It catalyses the reaction dodecanoate + ATP + CoA = dodecanoyl-CoA + AMP + diphosphate. The enzyme catalyses tetradecanoate + ATP + CoA = tetradecanoyl-CoA + AMP + diphosphate. The catalysed reaction is hexanoate + ATP + CoA = hexanoyl-CoA + AMP + diphosphate. It carries out the reaction butanoate + ATP + CoA = butanoyl-CoA + AMP + diphosphate. It catalyses the reaction hexadecanoate + ATP + CoA = hexadecanoyl-CoA + AMP + diphosphate. Catalyzes the activation of fatty acids by CoA to produce an acyl-CoA, the first step in fatty acid metabolism. Capable of activating medium-chain fatty acids (e.g. butyric (C4) to decanoic (C10) acids), and certain carboxylate-containing xenobiotics, e.g. benzoate. Also catalyzes the activation of lipoate to lipoyl-nucleoside monophosphate. Activates lipoate with GTP at a 1000-fold higher rate than with ATP and activates both (R)- and (S)-lipoate to the respective lipoyl-GMP, with a preference for (R)-lipoate. The sequence is that of Acyl-coenzyme A synthetase ACSM1, mitochondrial (Acsm1) from Mus musculus (Mouse).